Reading from the N-terminus, the 329-residue chain is Peroxidase 58 (329 aa).

The first 23 residues, 1–23, serve as a signal peptide directing secretion; the sequence is MGLSKTIPLVLLPILMFGVLSNA. 4 disulfide bridges follow: cysteine 34-cysteine 116, cysteine 67-cysteine 72, cysteine 122-cysteine 325, and cysteine 201-cysteine 234. Residue asparagine 36 is glycosylated (N-linked (GlcNAc...) asparagine). Histidine 65 functions as the Proton acceptor in the catalytic mechanism. Aspartate 66, valine 69, glycine 71, aspartate 73, and serine 75 together coordinate Ca(2+). A substrate-binding site is contributed by proline 164. Histidine 194 contacts heme b. Threonine 195 lines the Ca(2+) pocket. Residue asparagine 210 is glycosylated (N-linked (GlcNAc...) asparagine). The Ca(2+) site is built by aspartate 247, serine 250, and aspartate 255.

This sequence belongs to the peroxidase family. Classical plant (class III) peroxidase subfamily. Heme b serves as cofactor. Requires Ca(2+) as cofactor.

It localises to the secreted. It carries out the reaction 2 a phenolic donor + H2O2 = 2 a phenolic radical donor + 2 H2O. Functionally, removal of H(2)O(2), oxidation of toxic reductants, biosynthesis and degradation of lignin, suberization, auxin catabolism, response to environmental stresses such as wounding, pathogen attack and oxidative stress. These functions might be dependent on each isozyme/isoform in each plant tissue. In Arabidopsis thaliana (Mouse-ear cress), this protein is Peroxidase 58 (PER58).